The following is a 122-amino-acid chain: Elsinochromes biosynthesis cluster protein HP4 (122 aa).

Part of the gene cluster that mediates the biosynthesis of elsinochromes, pigments consisting of at least four interconvertible tautomers (A, B, C and D) that have a core phenolic quinone to which various side chains are attached and which play an important role in fungal pathogenesis. The non-reducing polyketide synthase PKS1 was proposed to iteratively catalyze decarboxylation between acetyl-CoA and malonyl-CoA subunits for polyketide chain elongation. The released polyketide undergoes cyclization to form an aromatic ring, and proceeds via serial modification steps to produce the heptaketide back- bone of elsinochrome. As elsinochrome has a symmetrical structure, two identical heptaketides are fused to form a core 1,2-dihydrobenzo-perylene ring structure, which can then be successively modified to produce the various derivatives of elsinochrome. Some of these reactions may be cooperatively carried out, at least in part, by the products of RDT1, OXR1 and PKS1. PRF1, embedded within the elsinochrome cluster possibly functions to stabilize some of the biosynthetic enzymes required for elsinochrome production. As prefoldin is a hexamer containing 2 a and 4 b subunits, additional prefoldin subunits, whose coding genes may not immediately link to the elsinochrome biosynthetic gene cluster, are required to fulfill the chaperone function. In addition, no methyltransferase-coding gene exists within the biosynthetic gene cluster, even though elsinochrome has four methyl groups at positions C3, C7, C8 and C12. Apparently, the identified gene cluster does not contain the entire entourage of genes responsible for elsinochrome biosynthesis. Once elsinochrome is synthesized, it must be exported outside the fungal cells, which is probably accomplished by the ECT1 transporter, to avoid toxicity. This is Elsinochromes biosynthesis cluster protein HP4 from Elsinoe fawcettii (Citrus scab fungus).